The chain runs to 196 residues: 3-isopropylmalate dehydratase small subunit (196 aa).

It belongs to the LeuD family. LeuD type 1 subfamily. As to quaternary structure, heterodimer of LeuC and LeuD.

It carries out the reaction (2R,3S)-3-isopropylmalate = (2S)-2-isopropylmalate. It functions in the pathway amino-acid biosynthesis; L-leucine biosynthesis; L-leucine from 3-methyl-2-oxobutanoate: step 2/4. In terms of biological role, catalyzes the isomerization between 2-isopropylmalate and 3-isopropylmalate, via the formation of 2-isopropylmaleate. The protein is 3-isopropylmalate dehydratase small subunit of Streptococcus thermophilus (strain CNRZ 1066).